The sequence spans 241 residues: Glycerol-3-phosphate acyltransferase (241 aa).

A run of 6 helical transmembrane segments spans residues 3 to 23 (ILYS…LLGS), 63 to 83 (IVFA…SAIV), 97 to 117 (YISP…PAYY), 131 to 151 (LIIS…LLVV), 156 to 176 (IVSL…WMPW), and 198 to 218 (LVNY…LVLV).

The protein belongs to the PlsY family. In terms of assembly, probably interacts with PlsX.

It is found in the cell membrane. It carries out the reaction an acyl phosphate + sn-glycerol 3-phosphate = a 1-acyl-sn-glycero-3-phosphate + phosphate. It functions in the pathway lipid metabolism; phospholipid metabolism. Catalyzes the transfer of an acyl group from acyl-phosphate (acyl-PO(4)) to glycerol-3-phosphate (G3P) to form lysophosphatidic acid (LPA). This enzyme utilizes acyl-phosphate as fatty acyl donor, but not acyl-CoA or acyl-ACP. The protein is Glycerol-3-phosphate acyltransferase of Mycoplasmopsis agalactiae (strain NCTC 10123 / CIP 59.7 / PG2) (Mycoplasma agalactiae).